The following is a 163-amino-acid chain: Deoxyuridine 5'-triphosphate nucleotidohydrolase (163 aa).

This sequence belongs to the dUTPase family. The cofactor is Mg(2+).

It catalyses the reaction dUTP + H2O = dUMP + diphosphate + H(+). It functions in the pathway pyrimidine metabolism; dUMP biosynthesis; dUMP from dCTP (dUTP route): step 2/2. Functionally, this enzyme is involved in nucleotide metabolism: it produces dUMP, the immediate precursor of thymidine nucleotides and it decreases the intracellular concentration of dUTP so that uracil cannot be incorporated into DNA. This Galliformes (FAdV-8) protein is Deoxyuridine 5'-triphosphate nucleotidohydrolase.